We begin with the raw amino-acid sequence, 265 residues long: Metallo-beta-lactamase VIM-7 (265 aa).

Residues 1–17 form the signal peptide; sequence MFQIRSFLVGISAFVMA. His-113, His-115, Asp-117, His-178, Cys-197, and His-239 together coordinate Zn(2+).

It belongs to the metallo-beta-lactamase superfamily. Class-B beta-lactamase family. Monomer. Zn(2+) serves as cofactor.

Its subcellular location is the periplasm. It catalyses the reaction a beta-lactam + H2O = a substituted beta-amino acid. Its function is as follows. Class B beta-lactamase which confers resistance to the beta-lactam antibiotics, including penicillins, cephalosporins and carbapenems. Acts via hydrolysis of the beta-lactam ring. Has penicillin-, cephalosporin- and carbapenem-hydrolyzing activities. The sequence is that of Metallo-beta-lactamase VIM-7 from Pseudomonas aeruginosa.